The following is a 124-amino-acid chain: Small ribosomal subunit protein uS12 (124 aa).

Residues 1 to 25 (MPTINQLIRKPRKSQKEKTASPALQ) form a disordered region. D89 carries the 3-methylthioaspartic acid modification.

The protein belongs to the universal ribosomal protein uS12 family. Part of the 30S ribosomal subunit. Contacts proteins S8 and S17. May interact with IF1 in the 30S initiation complex.

With S4 and S5 plays an important role in translational accuracy. Functionally, interacts with and stabilizes bases of the 16S rRNA that are involved in tRNA selection in the A site and with the mRNA backbone. Located at the interface of the 30S and 50S subunits, it traverses the body of the 30S subunit contacting proteins on the other side and probably holding the rRNA structure together. The combined cluster of proteins S8, S12 and S17 appears to hold together the shoulder and platform of the 30S subunit. The protein is Small ribosomal subunit protein uS12 of Borrelia duttonii (strain Ly).